A 776-amino-acid chain; its full sequence is Microtubule-associated protein tau (776 aa).

Basic and acidic residues predominate over residues 1 to 26 (MAEPRQEFEVMEDHAGTYGLGDRKDQ). Positions 1 to 591 (MAEPRQEFEV…PVPMPDLKNV (591 aa)) are disordered. Ala-2 is subject to N-acetylalanine. 2 positions are modified to phosphotyrosine: Tyr-18 and Tyr-29. Lys-44 is covalently cross-linked (Glycyl lysine isopeptide (Lys-Gly) (interchain with G-Cter in ubiquitin)). 2 positions are modified to phosphoserine: Ser-46 and Ser-61. Over residues 61 to 71 (SETSDAKSTPT) the composition is skewed to polar residues. Phosphothreonine occurs at positions 69, 71, and 111. 2 stretches are compositionally biased toward basic and acidic residues: residues 179-189 (EGGRHAPELLK) and 207-216 (GGKERPGSKE). Ser-214 carries the phosphoserine modification. Residues 217–228 (EVDEDRDVDESS) show a composition bias toward acidic residues. 2 stretches are compositionally biased toward basic and acidic residues: residues 293-303 (KGQDAHLEFTF) and 314-323 (EQAHSEEHLG). The span at 324-340 (RAAFPGAPGEGPEARGP) shows a compositional bias: low complexity. Composition is skewed to basic and acidic residues over residues 344 to 356 (EDTK…EPSE) and 381 to 393 (KSKD…DKKA). Residues 440–452 (KYVSSVTPRTGSS) are compositionally biased toward polar residues. Basic and acidic residues predominate over residues 455 to 466 (KEMKLKGADGKT). Phosphothreonine is present on Thr-470. Arg-472 bears the Omega-N-methylarginine mark. Lys-480 is modified (N6,N6-dimethyllysine; alternate). At Lys-480 the chain carries N6-acetyllysine; alternate. Phosphothreonine occurs at positions 486, 492, and 498. Ser-502, Ser-526, and Ser-530 each carry phosphoserine. Residues 517–528 (RSERGEPPKSGD) show a composition bias toward basic and acidic residues. Residues 529–549 (RSGYSSPGSPGTPGSRSRTPS) show a composition bias toward low complexity. Phosphotyrosine is present on Tyr-532. 3 positions are modified to phosphoserine: Ser-533, Ser-534, and Ser-537. Phosphothreonine is present on residues Thr-540 and Thr-547. At Ser-549 the chain carries Phosphoserine. Thr-552 carries the phosphothreonine modification. Lys-560 bears the N6-acetyllysine mark. Thr-566 is subject to Phosphothreonine. Ser-570 and Ser-572 each carry phosphoserine. Tau/MAP repeat units lie at residues 579 to 609 (QTAP…GGGK), 610 to 640 (VQII…GGGS), 641 to 671 (VQIV…GGGQ), and 672 to 703 (VEVK…GGGN). Lys-589 is covalently cross-linked (Glycyl lysine isopeptide (Lys-Gly) (interchain with G-Cter in ubiquitin)). Residue Lys-594 is modified to N6-acetyllysine; alternate. N6-methyllysine; alternate is present on Lys-594. Residue Lys-594 forms a Glycyl lysine isopeptide (Lys-Gly) (interchain with G-Cter in ubiquitin); alternate linkage. Ser-597 is subject to Phosphoserine. Lys-602 participates in a covalent cross-link: Glycyl lysine isopeptide (Lys-Gly) (interchain with G-Cter in ubiquitin). Lys-616 carries the post-translational modification N6-acetyllysine; alternate. A Glycyl lysine isopeptide (Lys-Gly) (interchain with G-Cter in ubiquitin); alternate cross-link involves residue Lys-616. Ser-620 and Ser-624 each carry phosphoserine. Lys-625 bears the N6-acetyllysine mark. Ser-628 bears the Phosphoserine mark. Lys-633 is subject to N6-acetyllysine; alternate. Lys-633 participates in a covalent cross-link: Glycyl lysine isopeptide (Lys-Gly) (interchain with G-Cter in ubiquitin); alternate. Ser-640 is subject to Phosphoserine. Lys-646 carries the post-translational modification N6,N6-dimethyllysine; alternate. An N6-acetyllysine; alternate mark is found at Lys-646, Lys-652, and Lys-656. Glycyl lysine isopeptide (Lys-Gly) (interchain with G-Cter in ubiquitin); alternate cross-links involve residues Lys-646, Lys-652, and Lys-656. At Ser-659 the chain carries Phosphoserine. Lys-666, Lys-678, and Lys-682 each carry N6-acetyllysine; alternate. Glycyl lysine isopeptide (Lys-Gly) (interchain with G-Cter in ubiquitin); alternate cross-links involve residues Lys-666, Lys-678, and Lys-682. The residue at position 684 (Arg-684) is an Omega-N-methylarginine. Phosphoserine is present on Ser-687. Lys-688 participates in a covalent cross-link: Glycyl lysine isopeptide (Lys-Gly) (interchain with G-Cter in ubiquitin). Ser-691 is subject to Phosphoserine. N6-acetyllysine; alternate is present on Lys-704. Lys-704 is covalently cross-linked (Glycyl lysine isopeptide (Lys-Gly) (interchain with G-Cter in ubiquitin); alternate). Lys-710 participates in a covalent cross-link: Glycyl lysine isopeptide (Lys-Gly) (interchain with G-Cter in ubiquitin). At Lys-720 the chain carries N6-acetyllysine; alternate. Residue Lys-720 forms a Glycyl lysine isopeptide (Lys-Gly) (interchain with G-Cter in ubiquitin); alternate linkage. The residue at position 729 (Tyr-729) is a Phosphotyrosine. Ser-731 and Ser-735 each carry phosphoserine. Residues 733-752 (VVSGDTSPRHLSNVSSTGSI) are disordered. The segment covering 736 to 751 (GDTSPRHLSNVSSTGS) has biased composition (polar residues). A Phosphothreonine modification is found at Thr-738. Residues Ser-739, Ser-744, Ser-751, and Ser-757 each carry the phosphoserine modification. Position 762 is a phosphothreonine (Thr-762).

Interacts with MARK1, MARK2, MARK3 and MARK4. Interacts with SQSTM1 when polyubiquitinated. Interacts with PSMC2 through SQSTM1. Interacts with FKBP4. Binds to CSNK1D. Interacts with SGK1. Interacts with EPM2A; the interaction dephosphorylates MAPT at Ser-396. Interacts with PIN1. Interacts with LRRK2. Interacts with LRP1, leading to endocytosis; this interaction is reduced in the presence of LRPAP1/RAP. Post-translationally, polyubiquitinated. Requires functional TRAF6 and may provoke SQSTM1-dependent degradation by the proteasome. In terms of processing, phosphorylation at various serine and threonine residues in S-P or T-P motifs by proline-directed protein kinases (PDPK1, CDK1, CDK5, GSK3, MAPK) (a few sites per protein in interphase, more in mitosis), and at serine residues in K-X-G-S motifs by MAP/microtubule affinity-regulating kinase (MARK1, MARK2, MARK3 or MARK4), causing detachment from microtubules, and their disassembly. Phosphorylation at Ser-597 by BRSK1 and BRSK2 in neurons affects ability to bind microtubules and plays a role in neuron polarization. Phosphorylated by PHK. Dephosphorylation at several serine and threonine residues by the serine/threonine phosphatase PPP5C. Phosphorylation at Ser-214 by SGK1 mediates microtubule depolymerization and neurite formation in hippocampal neurons.

The protein resides in the cytoplasm. It is found in the cytosol. It localises to the cell membrane. The protein localises to the cytoskeleton. Its subcellular location is the cell projection. The protein resides in the axon. It is found in the dendrite. Functionally, promotes microtubule assembly and stability, and might be involved in the establishment and maintenance of neuronal polarity. The C-terminus binds axonal microtubules while the N-terminus binds neural plasma membrane components, suggesting that tau functions as a linker protein between both. Axonal polarity is predetermined by tau localization (in the neuronal cell) in the domain of the cell body defined by the centrosome. The short isoforms allow plasticity of the cytoskeleton whereas the longer isoforms may preferentially play a role in its stabilization. This is Microtubule-associated protein tau (MAPT) from Pan troglodytes (Chimpanzee).